The sequence spans 161 residues: Large ribosomal subunit protein uL15 (161 aa).

The interval 1–57 (MRLKDAIPKKGSQQRGRRVGRGISAGQGASCGKGMRGQKSRSGGSTRPGFEGGQNPL) is disordered. Residues 23 to 35 (ISAGQGASCGKGM) show a composition bias toward gly residues.

It belongs to the universal ribosomal protein uL15 family. Part of the 50S ribosomal subunit.

Binds to the 23S rRNA. The polypeptide is Large ribosomal subunit protein uL15 (Trichodesmium erythraeum (strain IMS101)).